The primary structure comprises 296 residues: ATP-dependent ribose-1-phosphate kinase (296 aa).

Aspartate 242 serves as the catalytic Proton acceptor.

Belongs to the carbohydrate kinase PfkB family. Requires Mg(2+) as cofactor.

It carries out the reaction alpha-D-ribose 1-phosphate + ATP = alpha-D-ribose 1,5-bisphosphate + ADP + H(+). With respect to regulation, requires salt for kinase activity. 2.0 M is the optimal KCl concentration. Functionally, kinase involved in the non-carboxylating pentose bisphosphate pathway, a nucleoside degradation pathway present in some halophilic archaea. Catalyzes the ATP-dependent phosphorylation of ribose 1-phosphate (R1P) to ribose 1,5-bisphosphate (R15P). Shows weak activity towards various other phosphate acceptors, such as xylulose, 2'-deoxyguanosine and D-ribulose. ATP is the most preferred phosphate donor, followed by CTP and GTP. The sequence is that of ATP-dependent ribose-1-phosphate kinase from Halopiger xanaduensis (strain DSM 18323 / JCM 14033 / SH-6).